A 291-amino-acid chain; its full sequence is Heterogeneous nuclear ribonucleoprotein D-like-B (291 aa).

RRM domains are found at residues 34–116 (SKMF…QGKE) and 119–196 (KKVF…AAQP). Residues 196 to 226 (PKEVYRQQQQKQQKGGRGGTRGRGRGQGYSN) form a disordered region. A compositionally biased stretch (gly residues) spans 210–222 (GGRGGTRGRGRGQ).

The protein resides in the nucleus. It localises to the cytoplasm. Acts as a transcriptional regulator. Binds DNA and RNA. This is Heterogeneous nuclear ribonucleoprotein D-like-B (hnrnpdl-b) from Xenopus laevis (African clawed frog).